The chain runs to 234 residues: HTH-type transcriptional regulator ArcR (234 aa).

40 to 129 (VRHYTKGQVI…MAFLCKANDD (90 aa)) is an a nucleoside 3',5'-cyclic phosphate binding site. The HTH crp-type domain maps to 155–228 (KFAKDRIIKL…HKNWLVSKHL (74 aa)). A DNA-binding region (H-T-H motif) is located at residues 188–207 (IQLMSDMAGISRETAGHIIH).

It localises to the cytoplasm. Its function is as follows. Positively regulates the expression of the arcABDCR operon under anaerobic conditions, thus playing an essential role in arginine catabolism. May also control the expression of genes encoding proteins which are involved in anaerobic metabolism. Can bind cyclic AMP. The polypeptide is HTH-type transcriptional regulator ArcR (arcR) (Staphylococcus aureus (strain Mu50 / ATCC 700699)).